Reading from the N-terminus, the 172-residue chain is Large ribosomal subunit protein uL10 (172 aa).

Belongs to the universal ribosomal protein uL10 family. As to quaternary structure, part of the ribosomal stalk of the 50S ribosomal subunit. The N-terminus interacts with L11 and the large rRNA to form the base of the stalk. The C-terminus forms an elongated spine to which L12 dimers bind in a sequential fashion forming a multimeric L10(L12)X complex.

In terms of biological role, forms part of the ribosomal stalk, playing a central role in the interaction of the ribosome with GTP-bound translation factors. The polypeptide is Large ribosomal subunit protein uL10 (Bartonella henselae (strain ATCC 49882 / DSM 28221 / CCUG 30454 / Houston 1) (Rochalimaea henselae)).